The chain runs to 207 residues: MDTLLFATNNKNKAREVEEALKKINFPIHVITNQDLTDPPHVLETGTTFLANAKLKAHKMAEFSNLPTLADDSGLSVDKLNGAPGVHSARYGGEAHNDALNNAKLLAELGGVPREKRQATFHTTMVVSWPGRFDDDLVTQGEIRGEILTYPRGDGDFGYDPLFFVPDKGKTFAEMTVDEKNAISHRGQALRKLLAELPTWWKKMENE.

8–13 (TNNKNK) is a substrate binding site. The Proton acceptor role is filled by Asp-72. A Mg(2+)-binding site is contributed by Asp-72. Residues Ser-73, 157 to 160 (FGYD), Lys-180, and 185 to 186 (HR) contribute to the substrate site.

The protein belongs to the HAM1 NTPase family. In terms of assembly, homodimer. The cofactor is Mg(2+).

The catalysed reaction is XTP + H2O = XMP + diphosphate + H(+). It carries out the reaction dITP + H2O = dIMP + diphosphate + H(+). The enzyme catalyses ITP + H2O = IMP + diphosphate + H(+). Its function is as follows. Pyrophosphatase that catalyzes the hydrolysis of nucleoside triphosphates to their monophosphate derivatives, with a high preference for the non-canonical purine nucleotides XTP (xanthosine triphosphate), dITP (deoxyinosine triphosphate) and ITP. Seems to function as a house-cleaning enzyme that removes non-canonical purine nucleotides from the nucleotide pool, thus preventing their incorporation into DNA/RNA and avoiding chromosomal lesions. The protein is dITP/XTP pyrophosphatase of Lactobacillus johnsonii (strain CNCM I-12250 / La1 / NCC 533).